An 858-amino-acid chain; its full sequence is MSSPTSTPSRRKSKRGRGSNPPTPRGEEVQSPPSQKRRTEDSTSIGELLPMPTSPSGDIQSPLFSSPAPSRHSAHQSELDLSSPLTYGTPSSRVEGTPRSGIRGTPARQRADLGSARKVKQVDLHSDQPAAEELVTSEQSLGQKLVIWGTDVNVAICKEKFQRFVQRFIDPLAKEEENVGLDLNEPIYMQRLEEINVVGEPFLNIDCDHLRSFDQDLYRQLVCYPQEVIPTFDMAANEIFFERYPDSILEHQIQVRPYNALKTRNMRSLNPEDIDQLITISGMVIRTSQIIPEMQESFFKCQVCAFTTRVEIDRGRIAEPSVCKHCNTTHSMALIHNRSMFSDKQMIKLQESPEDMPAGQTPHTTILYAHNDLVDKVQPGDRVNVTGIYRAVPIRVNPRVRNVKSVYKTHIDVIHYRKTDSKRLHGIDEDTEQKMFTEERVAVLKELAAKPDIYERLAAALAPSIYEHEDIKKGILLQLFGGTRKDFSHTGRGKFRAEVNILLCGDPGTSKSQLLQYVYNLVPRGQYTSGKGSSAVGLTAYVMKDPETRQLVLQTGALVLSDNGICCIDEFDKMNESTRSVLHEVMEQQTLSIAKAGIICQLNARTSVLAAANPVESQWNPKKTTIENIQLPHTLLSRFDLIFLMLDPQDETYDRRLAHHLVALYYQSEEQLKEEHLDMAVLKDYIAYARTYVNPRLGEEASQALIEAYVDMRKIGSGRGMVSAYPRQLESLIRLSEAHAKVRFSSKVETIDVEEAKRLHREALKQSATDPRTGIVDISILTTGMSATARKRKEELAQVLKKLIQSKGKTPAFKYQQLFEDLRGQSDAAITKDMFDEALHALADEDYLTVTGKTVRLL.

Positions 1–125 are disordered; sequence MSSPTSTPSR…ARKVKQVDLH (125 aa). Composition is skewed to polar residues over residues 54 to 68 and 79 to 94; these read SPSG…SSPA and LDLS…SSRV. The C4-type zinc finger occupies 301 to 326; the sequence is CQVCAFTTRVEIDRGRIAEPSVCKHC. Residues 453–662 form the MCM domain; it reads IYERLAAALA…YDRRLAHHLV (210 aa). Residues Tyr-466, Arg-492, Lys-511, Ser-512, Asn-613, Arg-638, Arg-727, and Glu-730 each coordinate ATP. Residues 637–640 carry the Arginine finger motif; that stretch reads SRFD.

It belongs to the MCM family. As to quaternary structure, component of the mcm2-7 complex (RLF-M). The complex forms a toroidal hexameric ring with the proposed subunit order mcm2-mcm6-mcm4-mcm7-mcm3-mcm5. The heterodimer of mmcm3/mcm5 interacts with mcm4, mmcm6, mcm7 and weakly with mcm2. Component of the CMG helicase complex, composed of the mcm2-7 complex, the GINS complex and cdc45. In terms of processing, hyperphosphorylated during mitosis in a mechanism requiring cdc2-cyclin B and other kinases. Undergoes dephosphorylation after exiting mitosis, existing in a partially phosphorylated state in the cytosolic interphase mcm complex which associates with the pre-replication complexes (pre-Rcs). Complete dephosphorylation inactivates the mcm complex, preventing its binding to chromatin. Becomes actively phosphorylated during S phase once the mcm complex is assembled on the chromatin. This chromatin-associated phosphorylation occurs during the activation of the pre-Rcs and is independent of cdks. Phosphorylated by the cdc7-dbf4b complex.

The protein localises to the nucleus. Its subcellular location is the chromosome. The enzyme catalyses ATP + H2O = ADP + phosphate + H(+). Its function is as follows. Acts as a component of the MCM2-7 complex (MCM complex) which is the replicative helicase essential for 'once per cell cycle' DNA replication initiation and elongation in eukaryotic cells. Core component of CDC45-MCM-GINS (CMG) helicase, the molecular machine that unwinds template DNA during replication, and around which the replisome is built. The active ATPase sites in the MCM2-7 ring are formed through the interaction surfaces of two neighboring subunits such that a critical structure of a conserved arginine finger motif is provided in trans relative to the ATP-binding site of the Walker A box of the adjacent subunit. The six ATPase active sites, however, are likely to contribute differentially to the complex helicase activity. The protein is DNA replication licensing factor mcm4-A (mcm4-a) of Xenopus laevis (African clawed frog).